A 547-amino-acid chain; its full sequence is MAAKEIIFSEKARSRMVHGVNLLANAVKATLGPKGRHVVLDKSFGSPIITKDGVSVAKEIELADKFENMGAQMLKEVASKTNDHAGDGTTTATVLAQALIREGCKAVAAGMNPMDLKRGIDKAVIAAVTELKKISKPTSDDKAIAQVATISANSDESIGNIIAEAMKKVGKEGVITIEEGTTLENELDVVEGMQFDRGYSSPYFINNQQSQIVELDNPYILLHDKKISSVRDLLTVLDAVAKESKPLLIVAEEVEGEALATLVVNNIRGIIKVCAVKAPGFGDRRKAMLEDMAVLTGGTVISEEVGLSLEKATTSHLGKAKKVRVSKENTTIIDGMGDNDAINGRVKQIKTQIEETTSDYDREKLQERVAKLAGGVAVIKVGAATEVEMKEKKARVDDALLATRAAVEEGVIPGGGVALIRAITAISNLKGANEDQTHGIQIALRAMEAPLREIVANAGEEPSVILNKVKEGKDNFGYNAATGEFGDMVNLGILDPTKVTRSALQNAASIAGLMITTEAMVAEAPKKDEPTPPAAGGGMGGMGGMDF.

ATP is bound by residues 30–33 (TLGP), Lys51, 87–91 (DGTTT), Gly415, 479–481 (NAA), and Asp495. Residues 524–547 (APKKDEPTPPAAGGGMGGMGGMDF) form a disordered region. Residues 535–547 (AGGGMGGMGGMDF) show a composition bias toward gly residues.

This sequence belongs to the chaperonin (HSP60) family. Forms a cylinder of 14 subunits composed of two heptameric rings stacked back-to-back. Interacts with the co-chaperonin GroES.

The protein localises to the cytoplasm. It catalyses the reaction ATP + H2O + a folded polypeptide = ADP + phosphate + an unfolded polypeptide.. In terms of biological role, together with its co-chaperonin GroES, plays an essential role in assisting protein folding. The GroEL-GroES system forms a nano-cage that allows encapsulation of the non-native substrate proteins and provides a physical environment optimized to promote and accelerate protein folding. In Xylella fastidiosa (strain M23), this protein is Chaperonin GroEL.